Reading from the N-terminus, the 195-residue chain is Interferon tau (195 aa).

The first 23 residues, 1–23, serve as a signal peptide directing secretion; that stretch reads MAFVLSLRMALVLVSYCPGGSLG. 2 cysteine pairs are disulfide-bonded: C24-C122 and C52-C162. N101 carries an N-linked (GlcNAc...) asparagine glycan.

This sequence belongs to the alpha/beta interferon family. IFN-alphaII subfamily. In terms of tissue distribution, constitutively and exclusively expressed in the mononuclear cells of the extraembryonic trophectoderm.

Its subcellular location is the secreted. Functionally, paracrine hormone primarily responsible for maternal recognition of pregnancy. Interacts with endometrial receptors, probably type I interferon receptors, and blocks estrogen receptor expression, preventing the estrogen-induced increase in oxytocin receptor expression in the endometrium. This results in the suppression of the pulsatile endometrial release of the luteolytic hormone prostaglandin F2-alpha, hindering the regression of the corpus luteum (luteolysis) and therefore a return to ovarian cyclicity. This, and a possible direct effect of IFN-tau on prostaglandin synthesis, leads in turn to continued ovarian progesterone secretion, which stimulates the secretion by the endometrium of the nutrients required for the growth of the conceptus. In summary, displays particularly high antiviral and antiproliferative potency concurrently with particular weak cytotoxicity, high antiluteolytic activity and immunomodulatory properties. In contrast with other IFNs, IFN-tau is not virally inducible. The protein is Interferon tau (IFNT) of Ovibos moschatus (Muskox).